A 250-amino-acid chain; its full sequence is ATP synthase subunit a (250 aa).

Transmembrane regions (helical) follow at residues Ala-29–Ser-49, Phe-84–Phe-104, Ile-114–Tyr-134, Val-143–Ile-163, Phe-193–Ile-213, and Val-216–Leu-236.

The protein belongs to the ATPase A chain family. In terms of assembly, F-type ATPases have 2 components, CF(1) - the catalytic core - and CF(0) - the membrane proton channel. CF(1) has five subunits: alpha(3), beta(3), gamma(1), delta(1), epsilon(1). CF(0) has three main subunits: a(1), b(2) and c(9-12). The alpha and beta chains form an alternating ring which encloses part of the gamma chain. CF(1) is attached to CF(0) by a central stalk formed by the gamma and epsilon chains, while a peripheral stalk is formed by the delta and b chains.

Its subcellular location is the cell inner membrane. Key component of the proton channel; it plays a direct role in the translocation of protons across the membrane. In Rhizobium leguminosarum bv. trifolii (strain WSM2304), this protein is ATP synthase subunit a.